A 185-amino-acid polypeptide reads, in one-letter code: Ribosome-recycling factor (185 aa).

The protein belongs to the RRF family.

The protein resides in the cytoplasm. Its function is as follows. Responsible for the release of ribosomes from messenger RNA at the termination of protein biosynthesis. May increase the efficiency of translation by recycling ribosomes from one round of translation to another. The polypeptide is Ribosome-recycling factor (Citrifermentans bemidjiense (strain ATCC BAA-1014 / DSM 16622 / JCM 12645 / Bem) (Geobacter bemidjiensis)).